A 473-amino-acid chain; its full sequence is Venom prothrombin activator vestarin-D1 (473 aa).

Positions 1 to 20 are cleaved as a signal peptide; sequence MAPQLLLCLIQTFLWSLPEA. Positions 21-40 are excised as a propeptide; sequence ESNVFLKSNVANRFLQRTKR. In terms of domain architecture, Gla spans 41 to 86; it reads ANSGFEEIYPANFERECVEERCSKEEAREVFEDDEKTEAFWTVYVD. E46, E47, E54, E56, E59, E60, E65, E66, E69, E72, and E75 each carry 4-carboxyglutamate. An intrachain disulfide couples C57 to C62. In terms of domain architecture, EGF-like 1; calcium-binding spans 86 to 122; the sequence is DGDQCLSNPCHYGGTCKDGIGSYTCTCLAGYEGKNCE. 10 disulfide bridges follow: C90–C101, C95–C110, C112–C121, C129–C140, C136–C149, C151–C164, C172–C335, C235–C240, C383–C397, and C408–C436. O-linked (Hex...) serine glycosylation is present at S92. An EGF-like 2 domain is found at 129 to 164; the sequence is CRVDNGNCWHFCKPVQNDTQCSCAEGYRLGDNGFSC. Residues 182–228 constitute a propeptide, activation peptide; it reads REASLPDFQTDFSDDYDAIDENNLIETVQSQSATLLKKSDNPNPDIR. A Peptidase S1 domain is found at 229–460; sequence IVNGLDCKLG…FLPWIKTIMR (232 aa). H270 functions as the Charge relay system in the catalytic mechanism. N-linked (GlcNAc...) asparagine glycosylation is present at N273. The Charge relay system role is filled by D315. S412 (charge relay system) is an active-site residue.

This sequence belongs to the peptidase S1 family. Snake venom subfamily. As to quaternary structure, heterodimer of a light chain and a heavy chain; disulfide-linked. In terms of processing, the vitamin K-dependent, enzymatic carboxylation of some glutamate residues allows the modified protein to bind calcium. In terms of tissue distribution, expressed by the venom gland.

The protein resides in the secreted. The enzyme catalyses Selective cleavage of Arg-|-Thr and then Arg-|-Ile bonds in prothrombin to form thrombin.. Snake prothrombin activator that attacks the hemostatic system of prey. This protein is functionally similar to blood coagulation factor Xa. This is Venom prothrombin activator vestarin-D1 from Demansia vestigiata (Lesser black whip snake).